The primary structure comprises 625 residues: Chaperone protein HtpG (625 aa).

The tract at residues 1–341 (MEKKQFQAES…SEDLSLNISR (341 aa)) is a; substrate-binding. A b region spans residues 342 to 551 (EMLQHDRQLK…DGEITLEMEK (210 aa)). The tract at residues 552 to 625 (VLQAMPDNQN…FSQNMCKVMV (74 aa)) is c.

Belongs to the heat shock protein 90 family. As to quaternary structure, homodimer.

The protein localises to the cytoplasm. Molecular chaperone. Has ATPase activity. In Shouchella clausii (strain KSM-K16) (Alkalihalobacillus clausii), this protein is Chaperone protein HtpG.